The sequence spans 556 residues: 2-succinyl-5-enolpyruvyl-6-hydroxy-3-cyclohexene-1-carboxylate synthase (556 aa).

This sequence belongs to the TPP enzyme family. MenD subfamily. In terms of assembly, homodimer. The cofactor is Mg(2+). Mn(2+) serves as cofactor. It depends on thiamine diphosphate as a cofactor.

It catalyses the reaction isochorismate + 2-oxoglutarate + H(+) = 5-enolpyruvoyl-6-hydroxy-2-succinyl-cyclohex-3-ene-1-carboxylate + CO2. It functions in the pathway quinol/quinone metabolism; 1,4-dihydroxy-2-naphthoate biosynthesis; 1,4-dihydroxy-2-naphthoate from chorismate: step 2/7. Its pathway is quinol/quinone metabolism; menaquinone biosynthesis. Catalyzes the thiamine diphosphate-dependent decarboxylation of 2-oxoglutarate and the subsequent addition of the resulting succinic semialdehyde-thiamine pyrophosphate anion to isochorismate to yield 2-succinyl-5-enolpyruvyl-6-hydroxy-3-cyclohexene-1-carboxylate (SEPHCHC). This is 2-succinyl-5-enolpyruvyl-6-hydroxy-3-cyclohexene-1-carboxylate synthase from Shigella flexneri serotype 5b (strain 8401).